A 171-amino-acid polypeptide reads, in one-letter code: Putative MucR family transcriptional regulatory protein y4pD (171 aa).

Belongs to the ros/MucR family.

This chain is Putative MucR family transcriptional regulatory protein y4pD, found in Sinorhizobium fredii (strain NBRC 101917 / NGR234).